Reading from the N-terminus, the 88-residue chain is Elongation factor 1-beta (88 aa).

It belongs to the EF-1-beta/EF-1-delta family.

In terms of biological role, promotes the exchange of GDP for GTP in EF-1-alpha/GDP, thus allowing the regeneration of EF-1-alpha/GTP that could then be used to form the ternary complex EF-1-alpha/GTP/AAtRNA. The polypeptide is Elongation factor 1-beta (ef1b) (Thermoplasma acidophilum (strain ATCC 25905 / DSM 1728 / JCM 9062 / NBRC 15155 / AMRC-C165)).